Consider the following 390-residue polypeptide: Lipid-A-disaccharide synthase (390 aa).

The protein belongs to the LpxB family.

The enzyme catalyses a lipid X + a UDP-2-N,3-O-bis[(3R)-3-hydroxyacyl]-alpha-D-glucosamine = a lipid A disaccharide + UDP + H(+). It functions in the pathway bacterial outer membrane biogenesis; LPS lipid A biosynthesis. In terms of biological role, condensation of UDP-2,3-diacylglucosamine and 2,3-diacylglucosamine-1-phosphate to form lipid A disaccharide, a precursor of lipid A, a phosphorylated glycolipid that anchors the lipopolysaccharide to the outer membrane of the cell. The sequence is that of Lipid-A-disaccharide synthase from Neisseria gonorrhoeae (strain ATCC 700825 / FA 1090).